The primary structure comprises 792 residues: Ubiquitin carboxyl-terminal hydrolase 10 (792 aa).

The interval Thr2–Ser27 is DHR2-binding module. Disordered stretches follow at residues Ala64–Pro87 and Lys103–Pro320. Positions Asp107–Ser129 are enriched in low complexity. The tract at residues Thr109 to Ile145 is SIR4-binding module. The segment covering Glu144 to Gly171 has biased composition (basic and acidic residues). The segment at Asp167–Ser208 is UTP22-binding module. The segment covering Glu172–Gly195 has biased composition (acidic residues). Over residues Glu211–Leu220 the composition is skewed to basic and acidic residues. Over residues Ser226–Tyr241 the composition is skewed to acidic residues. Positions Val288–Arg297 are enriched in polar residues. One can recognise a USP domain in the interval Arg362–Leu733. Cys371 (nucleophile) is an active-site residue. Residues Leu526–Val563 form a disordered region. A compositionally biased stretch (polar residues) spans Ser530–Gly539. The segment covering Thr540 to Val563 has biased composition (low complexity). The Proton acceptor role is filled by His691. The span at Thr749–Asn766 shows a compositional bias: polar residues. The disordered stretch occupies residues Thr749–Lys792. Basic residues predominate over residues Asn773–Lys792.

Belongs to the peptidase C19 family. Interacts with SIR4. Interacts with the proliferating-cell nuclear antigen PCNA/POL30. Interacts with DHR2 and UTP22.

The protein resides in the nucleus. It localises to the chromosome. Its subcellular location is the telomere. The protein localises to the nucleolus. The enzyme catalyses Thiol-dependent hydrolysis of ester, thioester, amide, peptide and isopeptide bonds formed by the C-terminal Gly of ubiquitin (a 76-residue protein attached to proteins as an intracellular targeting signal).. Functionally, deubiquitinating enzyme involved in telomere and HM loci silencing, which is the repression of chromatin structure which leads to a stop in the transcription of nearby genes. Targets histone H2B for deubiquitination, thus helping to localize SIR2 to the telomere. At silent chromatin, including telomeres and the rDNA locus, not only maintains low H2B 'Lys-123' ubiquitination (H2BK123Ub), but also low H3 'Lys-4' and 'Lys-79' methylation (H3K4me and H3K79me, respectively). Controls the proliferating-cell nuclear antigen PCNA/POL30 deubiquitination which is crucial for keeping TLS polymerases in check as well as for down-regulating the error-free bypass. Deubiquitinates and stabilizes RPA190, the largest subunit of RNA polymerase I, to achieve optimal levels of ribosomes and cell growth. Also protects nutrient transporters such as GAP1 from ubiquitin-dependent endocytosis. This chain is Ubiquitin carboxyl-terminal hydrolase 10 (UBP10), found in Saccharomyces cerevisiae (strain ATCC 204508 / S288c) (Baker's yeast).